A 156-amino-acid polypeptide reads, in one-letter code: Large ribosomal subunit protein uL15 (156 aa).

A disordered region spans residues 25–49 (RGIGCGKGKTSGRGHKGQKARSGTS). Basic residues predominate over residues 34–43 (TSGRGHKGQK).

Belongs to the universal ribosomal protein uL15 family. In terms of assembly, part of the 50S ribosomal subunit.

In terms of biological role, binds to the 23S rRNA. This chain is Large ribosomal subunit protein uL15, found in Wolbachia sp. subsp. Brugia malayi (strain TRS).